Consider the following 276-residue polypeptide: Large ribosomal subunit protein uL2 (276 aa).

2 disordered regions span residues 1–58 and 218–276; these read MAIR…GGGH and RPIT…KNRK. The span at 16 to 27 shows a compositional bias: polar residues; it reads ASVSDFSDLTRS. Residues 255–276 are compositionally biased toward basic residues; that stretch reads RRPKKASNKMIVRRRPNGKNRK.

It belongs to the universal ribosomal protein uL2 family. In terms of assembly, part of the 50S ribosomal subunit. Forms a bridge to the 30S subunit in the 70S ribosome.

Its function is as follows. One of the primary rRNA binding proteins. Required for association of the 30S and 50S subunits to form the 70S ribosome, for tRNA binding and peptide bond formation. It has been suggested to have peptidyltransferase activity; this is somewhat controversial. Makes several contacts with the 16S rRNA in the 70S ribosome. The protein is Large ribosomal subunit protein uL2 of Bifidobacterium animalis subsp. lactis (strain AD011).